Reading from the N-terminus, the 622-residue chain is Polypeptide N-acetylgalactosaminyltransferase 6 (622 aa).

Topologically, residues 1–8 (MRLLRRRH) are cytoplasmic. Residues 9-28 (MSLRLAMLGSVFMLFLFIRQ) form a helical; Signal-anchor for type II membrane protein membrane-spanning segment. At 29–622 (KDVSNQEQAM…RDPYQLWLFV (594 aa)) the chain is on the lumenal side. The N-linked (GlcNAc...) asparagine glycan is linked to N86. The segment at 176–285 (LPTTSVIIVF…HGWLEPLLAR (110 aa)) is catalytic subdomain A. Mn(2+) contacts are provided by D269, H271, and H407. The interval 348 to 410 (PIKSPTFAGG…PCSVVGHVFR (63 aa)) is catalytic subdomain B. N476 carries N-linked (GlcNAc...) asparagine glycosylation. The 117-residue stretch at 506-622 (TNQCLDVGEN…RDPYQLWLFV (117 aa)) folds into the Ricin B-type lectin domain. Residues C509 and C527 are joined by a disulfide bond. UDP-N-acetyl-alpha-D-galactosamine contacts are provided by D511, E514, H528, and N533. Disulfide bonds link C553/C566 and C597/C610.

This sequence belongs to the glycosyltransferase 2 family. GalNAc-T subfamily. It depends on Mn(2+) as a cofactor.

The protein resides in the golgi apparatus membrane. The catalysed reaction is L-seryl-[protein] + UDP-N-acetyl-alpha-D-galactosamine = a 3-O-[N-acetyl-alpha-D-galactosaminyl]-L-seryl-[protein] + UDP + H(+). The enzyme catalyses L-threonyl-[protein] + UDP-N-acetyl-alpha-D-galactosamine = a 3-O-[N-acetyl-alpha-D-galactosaminyl]-L-threonyl-[protein] + UDP + H(+). It participates in protein modification; protein glycosylation. Its function is as follows. Catalyzes the initial reaction in O-linked oligosaccharide biosynthesis, the transfer of an N-acetyl-D-galactosamine residue to a serine or threonine residue on the protein receptor. May participate in synthesis of oncofetal fibronectin. Has activity toward Muc1a, Muc2, EA2 and fibronectin peptides. The sequence is that of Polypeptide N-acetylgalactosaminyltransferase 6 (Galnt6) from Mus musculus (Mouse).